The primary structure comprises 537 residues: Cytoplasmic dynein 2 intermediate chain 2 (537 aa).

At serine 15 the chain carries Phosphoserine. A DYNLL2 binding region spans residues arginine 80 to glutamate 93. Positions leucine 107–alanine 132 are DYNLRB1 binding. 5 WD repeats span residues glutamate 216–leucine 256, threonine 265–leucine 309, proline 391–serine 431, leucine 434–threonine 474, and glutamine 481–glycine 521.

This sequence belongs to the dynein light intermediate chain family. The cytoplasmic dynein 2 complex consists of two catalytic heavy chains (HCs) and a number of non-catalytic subunits presented by intermediate chains (ICs), light intermediate chains (LICs) and light chains (LCs). Among them, a heavy chain (DYNC2H1), two intermediate chains (DYNC2I2 and DYNC2I1), a light intermediate chain (DYNC2LI1), and a light chain (DYNLT2B) are unique to the cytoplasmic dynein complex 2, but a subset of the light chains are also shared by dynein-1 and dynein-2 complexes. Interacts with DYNC2I1; their C-terminal domains each bind a copy of the heavy chain, and their extended N-terminal regions are held together by an array of light chain dimers. Interacts with DYNLL2; this interaction is essential for dynein-2-mediated retrograde trafficking of ciliary proteins. Interacts with DYNLRB1; this interaction is essential for dynein-2-mediated retrograde trafficking of ciliary proteins. Interacts (via the WD domains) with MAP3K7 and TAB3. Interacts (via WD domains) with TAB2 (via C-terminus). Interacts (via WD domains) with TRAF6 (via TRAF-type domains). As to expression, expressed in brain, thymus, heart, lung, liver, spleen, kidney, testis and intestine.

The protein resides in the cytoplasm. The protein localises to the cytoskeleton. Its subcellular location is the cilium basal body. It localises to the cilium axoneme. It is found in the cell projection. The protein resides in the cilium. The protein localises to the microtubule organizing center. Its subcellular location is the centrosome. It localises to the filopodium. Acts as one of several non-catalytic accessory components of the cytoplasmic dynein 2 complex (dynein-2 complex), a motor protein complex that drives the movement of cargos along microtubules within cilia and flagella in concert with the intraflagellar transport (IFT) system. DYNC2I2 plays a major role in retrograde ciliary protein trafficking and in ciliogenesis. Required also to maintain a functional transition zone. In terms of biological role, acts as a negative regulator of the Toll-like and IL-1R receptor signaling pathways. Inhibits the MAP3K7-induced NF-kappa-B activation pathway. Inhibits MAP3K7 phosphorylation at 'Thr-184' and 'Thr-187' upon Il-1 beta stimulation. This is Cytoplasmic dynein 2 intermediate chain 2 (Dync2i2) from Mus musculus (Mouse).